The following is a 488-amino-acid chain: NAD-reducing hydrogenase HoxS subunit beta (488 aa).

Residues C62, C65, C458, and C461 each contribute to the Ni(2+) site.

The protein belongs to the [NiFe]/[NiFeSe] hydrogenase large subunit family. As to quaternary structure, tetramer of an alpha and a gamma subunits (flavin-containing dimer), and a delta and a nickel-containing beta subunits (hydrogenase dimer). Requires FMN as cofactor. The cofactor is Ni(2+).

The protein resides in the cytoplasm. The catalysed reaction is H2 + NAD(+) = NADH + H(+). This is NAD-reducing hydrogenase HoxS subunit beta (hoxH) from Cupriavidus necator (strain ATCC 17699 / DSM 428 / KCTC 22496 / NCIMB 10442 / H16 / Stanier 337) (Ralstonia eutropha).